The sequence spans 132 residues: Holo-[acyl-carrier-protein] synthase (132 aa).

Mg(2+) is bound by residues aspartate 8 and glutamate 64.

The protein belongs to the P-Pant transferase superfamily. AcpS family. Requires Mg(2+) as cofactor.

The protein resides in the cytoplasm. It carries out the reaction apo-[ACP] + CoA = holo-[ACP] + adenosine 3',5'-bisphosphate + H(+). Transfers the 4'-phosphopantetheine moiety from coenzyme A to a Ser of acyl-carrier-protein. This Shewanella woodyi (strain ATCC 51908 / MS32) protein is Holo-[acyl-carrier-protein] synthase.